The sequence spans 724 residues: Small conductance calcium-activated potassium channel protein 3 (724 aa).

Over residues 1 to 11 the composition is skewed to basic and acidic residues; it reads MDTSGHFHDSG. Disordered regions lie at residues 1-161 and 232-251; these read MDTS…RDSN and ATHN…FPKA. Pro residues predominate over residues 34-58; it reads QPPPPPPPPAPPAAPQQPPGPPLQP. The span at 59–88 shows a compositional bias: low complexity; sequence QPLQLQQQQQQQQQQPPHPLSQLAQLQSQP. Over residues 105–125 the composition is skewed to polar residues; the sequence is PSSNSTAILHPSSRQGSQLNL. A compositionally biased stretch (low complexity) spans 131–140; that stretch reads GHSPSSTATS. Serine 160 bears the Phosphoserine mark. Residues 232 to 249 are compositionally biased toward polar residues; it reads ATHNHQHAGTTASSTTFP. A helical membrane pass occupies residues 281–301; sequence LIFGMFGIVVMVIETELSWGL. Residues 308–328 traverse the membrane as a helical segment; the sequence is FSLALKCLISLSTIILLGLII. The chain crosses the membrane as a helical span at residues 359–379; sequence ISLEMLVCAIHPIPGEYKFFW. A helical membrane pass occupies residues 398–418; that stretch reads IILSIPMFLRLYLIARVMLLH. The helical transmembrane segment at 447-467 threads the bilayer; that stretch reads LMTICPGTVLLVFSISLWIIA. Residues 487–507 constitute an intramembrane region (pore-forming); that stretch reads FLGAMWLISITFLSIGYGDMV. Residues 516–536 form a helical membrane-spanning segment; sequence VCLLTGIMGAGCTALVVAVVA. Residues 554 to 630 are calmodulin-binding; sequence DTQLTKRIKN…LVDLSKMQNV (77 aa). Residues 635-662 adopt a coiled-coil conformation; sequence ITELNDRSEDLEKQIGSLESKLEHLTAS. Positions 702-724 are disordered; that stretch reads LSDSPIGVSSTSFPTPYTSSSSC. Over residues 710–724 the composition is skewed to low complexity; it reads SSTSFPTPYTSSSSC.

This sequence belongs to the potassium channel KCNN family. KCa2.3/KCNN3 subfamily. As to quaternary structure, homodimer. Heteromultimer with KCNN2 or KCNN1; this modulates plasma membrane expression and consequently the small conductance calcium-activated potassium channel activity. The complex is composed of 4 channel subunits each of which binds to a calmodulin subunit which regulates the channel activity through calcium-binding. Interacts with CALM1.

It localises to the cell membrane. Its subcellular location is the cytoplasm. The protein localises to the myofibril. It is found in the sarcomere. The protein resides in the z line. The catalysed reaction is K(+)(in) = K(+)(out). Its activity is regulated as follows. Inhibited by bee venom neurotoxin apamin. Small conductance calcium-activated potassium channel that mediates the voltage-independent transmembrane transfer of potassium across the cell membrane through a constitutive interaction with calmodulin which binds the intracellular calcium allowing its opening. The current is characterized by a voltage-independent activation, an intracellular calcium concentration increase-dependent activation and a single-channel conductance of 10 picosiemens. Also presents an inwardly rectifying current, thus reducing its already small outward conductance of potassium ions, which is particularly the case when the membrane potential displays positive values, above + 20 mV. Activation is followed by membrane hyperpolarization. Thought to regulate neuronal excitability by contributing to the slow component of synaptic afterhyperpolarization. This Sus scrofa (Pig) protein is Small conductance calcium-activated potassium channel protein 3.